The chain runs to 418 residues: Gamma-glutamyl phosphate reductase (418 aa).

It belongs to the gamma-glutamyl phosphate reductase family.

The protein resides in the cytoplasm. The catalysed reaction is L-glutamate 5-semialdehyde + phosphate + NADP(+) = L-glutamyl 5-phosphate + NADPH + H(+). It participates in amino-acid biosynthesis; L-proline biosynthesis; L-glutamate 5-semialdehyde from L-glutamate: step 2/2. In terms of biological role, catalyzes the NADPH-dependent reduction of L-glutamate 5-phosphate into L-glutamate 5-semialdehyde and phosphate. The product spontaneously undergoes cyclization to form 1-pyrroline-5-carboxylate. This is Gamma-glutamyl phosphate reductase from Histophilus somni (strain 129Pt) (Haemophilus somnus).